A 174-amino-acid polypeptide reads, in one-letter code: Large ribosomal subunit protein bL12cz (174 aa).

Residues methionine 1–threonine 45 constitute a chloroplast transit peptide. The tract at residues methionine 1–alanine 46 is disordered. Residues serine 7–serine 18 are compositionally biased toward low complexity. The segment covering serine 19–threonine 29 has biased composition (pro residues).

This sequence belongs to the bacterial ribosomal protein bL12 family.

It localises to the plastid. It is found in the chloroplast. The protein is Large ribosomal subunit protein bL12cz (RPL12-1) of Secale cereale (Rye).